A 368-amino-acid polypeptide reads, in one-letter code: Glycolate oxidase 3 (368 aa).

Residue M1 is modified to N-acetylmethionine. Residues 1 to 359 enclose the FMN hydroxy acid dehydrogenase domain; that stretch reads MEITNVMEYE…SRTHIKTDWD (359 aa). Y24 lines the glyoxylate pocket. Residues 77–79, S106, 127–129, and T155 contribute to the FMN site; these read PTA and QLY. Y129 lines the glyoxylate pocket. R164 provides a ligand contact to glyoxylate. FMN-binding residues include K230 and S252. 2 residues coordinate glyoxylate: H254 and R257. The active-site Proton acceptor is the H254. FMN contacts are provided by residues 285-289 and 308-309; these read DGGVR and GR.

The protein belongs to the FMN-dependent alpha-hydroxy acid dehydrogenase family. Homotetramer. The cofactor is FMN.

It is found in the peroxisome. The catalysed reaction is glycolate + O2 = glyoxylate + H2O2. It functions in the pathway photosynthesis; photorespiration; glycine from 2-phosphoglycolate: step 2/3. Its function is as follows. Catalyzes the oxidation of glycolate to glyoxylate, with a reduction of O2 to H2O2. Is a key enzyme in photorespiration in green plants. The chain is Glycolate oxidase 3 (GLO5) from Arabidopsis thaliana (Mouse-ear cress).